Reading from the N-terminus, the 288-residue chain is Phosphatidylserine decarboxylase proenzyme (288 aa).

Residues D95, H152, and S255 each act as charge relay system; for autoendoproteolytic cleavage activity in the active site. Residue S255 is the Schiff-base intermediate with substrate; via pyruvic acid; for decarboxylase activity of the active site. S255 bears the Pyruvic acid (Ser); by autocatalysis mark.

Belongs to the phosphatidylserine decarboxylase family. PSD-B subfamily. Prokaryotic type I sub-subfamily. As to quaternary structure, heterodimer of a large membrane-associated beta subunit and a small pyruvoyl-containing alpha subunit. Requires pyruvate as cofactor. Is synthesized initially as an inactive proenzyme. Formation of the active enzyme involves a self-maturation process in which the active site pyruvoyl group is generated from an internal serine residue via an autocatalytic post-translational modification. Two non-identical subunits are generated from the proenzyme in this reaction, and the pyruvate is formed at the N-terminus of the alpha chain, which is derived from the carboxyl end of the proenzyme. The autoendoproteolytic cleavage occurs by a canonical serine protease mechanism, in which the side chain hydroxyl group of the serine supplies its oxygen atom to form the C-terminus of the beta chain, while the remainder of the serine residue undergoes an oxidative deamination to produce ammonia and the pyruvoyl prosthetic group on the alpha chain. During this reaction, the Ser that is part of the protease active site of the proenzyme becomes the pyruvoyl prosthetic group, which constitutes an essential element of the active site of the mature decarboxylase.

It localises to the cell membrane. It carries out the reaction a 1,2-diacyl-sn-glycero-3-phospho-L-serine + H(+) = a 1,2-diacyl-sn-glycero-3-phosphoethanolamine + CO2. It functions in the pathway phospholipid metabolism; phosphatidylethanolamine biosynthesis; phosphatidylethanolamine from CDP-diacylglycerol: step 2/2. Its function is as follows. Catalyzes the formation of phosphatidylethanolamine (PtdEtn) from phosphatidylserine (PtdSer). In Methylococcus capsulatus (strain ATCC 33009 / NCIMB 11132 / Bath), this protein is Phosphatidylserine decarboxylase proenzyme.